The following is a 322-amino-acid chain: Beta-1,4-galactosyltransferase 7 (322 aa).

Residues 1 to 9 (MVNISTINW) are Cytoplasmic-facing. A helical; Signal-anchor for type II membrane protein transmembrane segment spans residues 10-30 (VFVCGLSFCLGGIAVLSLMPL). Residues 31–322 (GSDCVCPLSN…TAAAASAVQT (292 aa)) are Lumenal-facing. The UDP-alpha-D-galactose site is built by P82, R84, D145, and V146. D147 contacts Mn(2+). UDP-alpha-D-galactose-binding residues include Y177, G185, W207, and G208. L209 contacts beta-D-xylose. E210 is a binding site for UDP-alpha-D-galactose. Residues D211 and D212 each contribute to the beta-D-xylose site. A glycan (N-linked (GlcNAc...) asparagine) is linked at N236. Positions 241, 243, and 250 each coordinate UDP-alpha-D-galactose. Mn(2+) is bound by residues H241 and H243. Cystine bridges form between C255-C310 and C300-C308.

This sequence belongs to the glycosyltransferase 7 family. It depends on Mn(2+) as a cofactor. Expressed in male and female adults. Expressed in head.

It localises to the golgi apparatus membrane. It carries out the reaction 3-O-(beta-D-xylosyl)-L-seryl-[protein] + UDP-alpha-D-galactose = 3-O-(beta-D-galactosyl-(1-&gt;4)-beta-D-xylosyl)-L-seryl-[protein] + UDP + H(+). It functions in the pathway protein modification; protein glycosylation. In terms of biological role, transfers galactose from UDP-D-Galactose (UDP-Gal) to the acceptor xylose residue in the linkage tetrasaccharide region of the glycosaminoglycan side chain of proteoglycans. No activity towards beta-GlcNAc, beta-Glc, beta-Gal, and beta-GalNAc as acceptors. The protein is Beta-1,4-galactosyltransferase 7 of Drosophila melanogaster (Fruit fly).